Here is a 445-residue protein sequence, read N- to C-terminus: Phosphoglucosamine mutase (445 aa).

The Phosphoserine intermediate role is filled by serine 102. Residues serine 102, aspartate 241, aspartate 243, and aspartate 245 each contribute to the Mg(2+) site. Position 102 is a phosphoserine (serine 102).

This sequence belongs to the phosphohexose mutase family. Mg(2+) serves as cofactor. Post-translationally, activated by phosphorylation.

It carries out the reaction alpha-D-glucosamine 1-phosphate = D-glucosamine 6-phosphate. In terms of biological role, catalyzes the conversion of glucosamine-6-phosphate to glucosamine-1-phosphate. The protein is Phosphoglucosamine mutase of Shewanella baltica (strain OS155 / ATCC BAA-1091).